We begin with the raw amino-acid sequence, 34 residues long: Kappa-theraphotoxin-Scg1a (34 aa).

3 disulfide bridges follow: Cys-2–Cys-16, Cys-9–Cys-21, and Cys-15–Cys-28. The segment at 4–6 (YLF) is involved in active face.

The protein belongs to the neurotoxin 10 (Hwtx-1) family. 09 (HaTx) subfamily. As to expression, expressed by the venom gland.

Its subcellular location is the secreted. Functionally, reversibly inhibits potassium currents in oocytes expressing Kv2.1/KCNB1 channels (Kd=2.7 uM). Acts by shifting activation of the channel to more depolarized voltages. The toxin may bind to the S3b-S4 helices of the voltage sensor paddle. One, two, three or four toxin molecules may bind the Kv2.1/KCNB1 channel. It shows low to moderate affinity for lipid bilayers. It partitions into the bilayer membrane, where it stabilizes at the water/membrane interface. This Stromatopelma calceatum griseipes (Feather leg baboon tarantula) protein is Kappa-theraphotoxin-Scg1a.